Reading from the N-terminus, the 211-residue chain is Guanylate kinase (211 aa).

The 180-residue stretch at 5–184 (GLLIVFSGPS…AAERVKRIIE (180 aa)) folds into the Guanylate kinase-like domain. 12–19 (GPSGVGKG) lines the ATP pocket.

It belongs to the guanylate kinase family.

The protein localises to the cytoplasm. The enzyme catalyses GMP + ATP = GDP + ADP. Its function is as follows. Essential for recycling GMP and indirectly, cGMP. This Streptococcus pyogenes serotype M3 (strain SSI-1) protein is Guanylate kinase.